The chain runs to 513 residues: Palmitoyltransferase ZDHHC14 (513 aa).

The Cytoplasmic segment spans residues 1 to 59 (MHLGVEEPIRECQYNQICTHNSSPMDTPHIKKKKNKRKWQVFPGRNRFYCNGRIMMAKQ). Residues 60-80 (TGVFYLTMVLILVTSGLFFAF) traverse the membrane as a helical segment. The Lumenal segment spans residues 81 to 88 (DCPFLASN). A helical transmembrane segment spans residues 89–109 (LTPAIPAIGGVLFVFVMGMLL). Residues 110 to 207 (RASFSDPGVL…GNCVGRRNYR (98 aa)) lie on the Cytoplasmic side of the membrane. A DHHC domain is found at 164 to 214 (KYCFTCKIFRPPRASHCSLCDNCVDRFDHHCPWVGNCVGRRNYRFFYLFIL). C194 serves as the catalytic S-palmitoyl cysteine intermediate. Residues 208–228 (FFYLFILSLSFLTIFIFAFVI) form a helical membrane-spanning segment. At 229–266 (THVILNALRKALALSTAADFEAVQKDPTGLAFLVLSKT) the chain is on the lumenal side. Residues 267–287 (ALLDILEVVVCFFSVWSIVGL) form a helical membrane-spanning segment. Residues 288-513 (SGFHTYLISS…VRGLVKLSSV (226 aa)) lie on the Cytoplasmic side of the membrane. A disordered region spans residues 348–369 (FIQPDTPQPATQTNGTSACPPN). Residues 355 to 369 (QPATQTNGTSACPPN) show a composition bias toward polar residues.

The protein belongs to the DHHC palmitoyltransferase family. ERF2/ZDHHC9 subfamily.

Its subcellular location is the endoplasmic reticulum membrane. The protein localises to the golgi apparatus membrane. The enzyme catalyses L-cysteinyl-[protein] + hexadecanoyl-CoA = S-hexadecanoyl-L-cysteinyl-[protein] + CoA. Palmitoyltransferase that could catalyze the addition of palmitate onto various protein substrates. In Danio rerio (Zebrafish), this protein is Palmitoyltransferase ZDHHC14 (zdhhc14).